Reading from the N-terminus, the 288-residue chain is Probable prolyl 4-hydroxylase 9 (288 aa).

Residues 1 to 12 lie on the Cytoplasmic side of the membrane; it reads MKSRLKSYRRKK. A helical; Signal-anchor for type II membrane protein transmembrane segment spans residues 13-33; the sequence is LGLATVIVFCSLCFLFGFYGS. Residues 34–288 lie on the Lumenal side of the membrane; sequence TLLSQNVPRV…KWIRDQDQEE (255 aa). The 120-residue stretch at 164–283 folds into the Fe2OG dioxygenase domain; it reads HGESFNILRY…KWVATKWIRD (120 aa). The Fe cation site is built by His182 and Asp184. N-linked (GlcNAc...) asparagine glycans are attached at residues Asn221 and Asn255. His264 provides a ligand contact to Fe cation. Lys274 provides a ligand contact to 2-oxoglutarate.

Belongs to the P4HA family. It depends on Fe(2+) as a cofactor. Requires L-ascorbate as cofactor.

It localises to the endoplasmic reticulum membrane. It is found in the golgi apparatus. The enzyme catalyses L-prolyl-[collagen] + 2-oxoglutarate + O2 = trans-4-hydroxy-L-prolyl-[collagen] + succinate + CO2. Functionally, catalyzes the post-translational formation of 4-hydroxyproline in -Xaa-Pro-Gly- sequences in proline-rich peptide sequences of plant glycoproteins and other proteins. Hydroxyprolines are important constituent of many plant cell wall glycoproteins such as extensins, hydroxyproline-rich glycoproteins, lectins and arabinogalactan proteins. In Arabidopsis thaliana (Mouse-ear cress), this protein is Probable prolyl 4-hydroxylase 9.